The primary structure comprises 348 residues: Phage-like element PBSX protein XkdT (348 aa).

It belongs to the Mu gp47/PBSX XkdT family.

The chain is Phage-like element PBSX protein XkdT (xkdT) from Bacillus subtilis (strain 168).